Reading from the N-terminus, the 132-residue chain is Pre-histone-like nucleoprotein (132 aa).

Residues 2-23 constitute a propeptide that is removed on maturation; it reads AILISPSNNTGWGLGTHKLFGG. The short motif at 124–132 is the Nuclear localization signal element; sequence RRKRRVRSK.

This sequence belongs to the adenoviridae histone-like nucleoprotein family. Interacts with the core-capsid bridging protein; this interaction bridges the virus core to the capsid. Interacts with host NPM1; this interaction might play a role in placing the pre-histone-like nucleoprotein on the viral DNA or regulating viral gene expression. Interacts with host HMGB1; this interaction inhibits host immune response. Cleaved near the N-terminus by the viral protease during virion maturation to form the mature protein.

Its subcellular location is the virion. The protein localises to the host nucleus. It localises to the host nucleolus. In terms of biological role, plays a role in the inhibition of host immune response within the nucleus. Interacts with cellular nucleosomes and immobilizes the host immune danger signal HMGB1 on chromatin. In turn, prevents HMGB1 release out of the cell and thus decreases inflammation. Also plays a role in the wrapping and condensation of the viral DNA. May also promote viral genome import into the nucleus. The protein is Pre-histone-like nucleoprotein of Canine adenovirus serotype 1 (strain RI261) (CAdV-1).